A 388-amino-acid chain; its full sequence is 3-dehydroquinate synthase (388 aa).

The protein belongs to the archaeal-type DHQ synthase family.

It catalyses the reaction 2-amino-2,3,7-trideoxy-D-lyxo-hept-6-ulosonate + NAD(+) + H2O = 3-dehydroquinate + NH4(+) + NADH + H(+). Functionally, catalyzes the oxidative deamination and cyclization of 2-amino-3,7-dideoxy-D-threo-hept-6-ulosonic acid (ADH) to yield 3-dehydroquinate (DHQ), which is fed into the canonical shikimic pathway of aromatic amino acid biosynthesis. The polypeptide is 3-dehydroquinate synthase (Natronomonas pharaonis (strain ATCC 35678 / DSM 2160 / CIP 103997 / JCM 8858 / NBRC 14720 / NCIMB 2260 / Gabara) (Halobacterium pharaonis)).